Consider the following 94-residue polypeptide: ATP synthase F(0) complex subunit f, mitochondrial (94 aa).

N-acetylalanine is present on Ala2. The residue at position 3 (Ser3) is a Phosphoserine. Position 22 is an N6-acetyllysine (Lys22). A helical membrane pass occupies residues 68 to 85 (MVLACYVLFSYSFSYKHL).

Belongs to the ATPase F chain family. Component of the ATP synthase complex composed at least of ATP5F1A/subunit alpha, ATP5F1B/subunit beta, ATP5MC1/subunit c (homooctomer), MT-ATP6/subunit a, MT-ATP8/subunit 8, ATP5ME/subunit e, ATP5MF/subunit f, ATP5MG/subunit g, ATP5MK/subunit k, ATP5MJ/subunit j, ATP5F1C/subunit gamma, ATP5F1D/subunit delta, ATP5F1E/subunit epsilon, ATP5PF/subunit F6, ATP5PB/subunit b, ATP5PD/subunit d, ATP5PO/subunit OSCP. ATP synthase complex consists of a soluble F(1) head domain (subunits alpha(3) and beta(3)) - the catalytic core - and a membrane F(0) domain - the membrane proton channel (subunits c, a, 8, e, f, g, k and j). These two domains are linked by a central stalk (subunits gamma, delta, and epsilon) rotating inside the F1 region and a stationary peripheral stalk (subunits F6, b, d, and OSCP).

The protein localises to the mitochondrion. It is found in the mitochondrion inner membrane. Functionally, subunit f, of the mitochondrial membrane ATP synthase complex (F(1)F(0) ATP synthase or Complex V) that produces ATP from ADP in the presence of a proton gradient across the membrane which is generated by electron transport complexes of the respiratory chain. ATP synthase complex consist of a soluble F(1) head domain - the catalytic core - and a membrane F(1) domain - the membrane proton channel. These two domains are linked by a central stalk rotating inside the F(1) region and a stationary peripheral stalk. During catalysis, ATP synthesis in the catalytic domain of F(1) is coupled via a rotary mechanism of the central stalk subunits to proton translocation. In vivo, can only synthesize ATP although its ATP hydrolase activity can be activated artificially in vitro. Part of the complex F(0) domain. This Pongo abelii (Sumatran orangutan) protein is ATP synthase F(0) complex subunit f, mitochondrial.